Consider the following 150-residue polypeptide: Cytochrome b5 type B (150 aa).

Positions 1-15 (MSGSMATAEASGSDG) are excised as a propeptide. The disordered stretch occupies residues 1–20 (MSGSMATAEASGSDGKGQEV). A Phosphoserine modification is found at Ser-23. One can recognise a Cytochrome b5 heme-binding domain in the interval 24 to 100 (VTYYRLEEVA…LKQYYIGDIH (77 aa)). N6-acetyllysine is present on Lys-34. The residue at position 37 (Ser-37) is a Phosphoserine. Lys-39 carries the post-translational modification N6-methyllysine. Heme is bound by residues His-59 and His-83. A Phosphoserine modification is found at Ser-84. A helical membrane pass occupies residues 123-140 (WAYWILPIIGAVLLGFLY).

Belongs to the cytochrome b5 family. As to quaternary structure, component of a complex composed of cytochrome b5, NADH-cytochrome b5 reductase (CYB5R3) and MTARC2.

The protein localises to the mitochondrion outer membrane. Cytochrome b5 is a membrane-bound hemoprotein functioning as an electron carrier for several membrane-bound oxygenases. This is Cytochrome b5 type B (CYB5B) from Homo sapiens (Human).